A 406-amino-acid chain; its full sequence is UPF0754 membrane protein Cyan7425_4067 (406 aa).

The chain crosses the membrane as a helical span at residues 381–401; that stretch reads IVTLGGVLGLLIGIAQSVLLL.

This sequence belongs to the UPF0754 family.

It localises to the cell inner membrane. The chain is UPF0754 membrane protein Cyan7425_4067 from Cyanothece sp. (strain PCC 7425 / ATCC 29141).